The primary structure comprises 570 residues: Protein misato homolog 1 (570 aa).

A Phosphoserine modification is found at Ser495.

The protein belongs to the misato family. As to expression, present in all cell lines tested (at protein level). Widely expressed.

Its subcellular location is the mitochondrion outer membrane. It is found in the cytoplasm. Functionally, involved in the regulation of mitochondrial distribution and morphology. Required for mitochondrial fusion and mitochondrial network formation. The protein is Protein misato homolog 1 (MSTO1) of Homo sapiens (Human).